A 365-amino-acid polypeptide reads, in one-letter code: Probable G-protein coupled receptor 142 (365 aa).

The Extracellular segment spans residues 1–66 (MHLNSNPNSY…WPESPERSPC (66 aa)). N-linked (GlcNAc...) asparagine glycosylation is present at Asn44. Residues 67 to 87 (VAGIIPVIYYSVLLSLGLPVA) traverse the membrane as a helical segment. Residues 88 to 102 (LARLAARTRKPSYHY) are Cytoplasmic-facing. The chain crosses the membrane as a helical span at residues 103–123 (LLALTASDIVTQVIIVFVGFL). The Extracellular portion of the chain corresponds to 124-140 (LQGAVLARQVPQAVVRT). A helical transmembrane segment spans residues 141–161 (ANILEFAANHASVWIAVLFTV). The Cytoplasmic segment spans residues 162 to 185 (DRYNALCRPLRHRATSSPGRTHRA). Residues 186–206 (IAAVIGVTLLTGIPFYWWLDV) traverse the membrane as a helical segment. At 207-224 (WRDADPPSTMDKLLKWAH) the chain is on the extracellular side. Residues 225-245 (CLIVYFIPCNVFLVTNSAIIL) traverse the membrane as a helical segment. At 246–264 (RLRKRGQRGLRPLVSKSTA) the chain is on the cytoplasmic side. The helical transmembrane segment at 265–285 (ILLGVTSLFALLWAPRIIVML) threads the bilayer. At 286–304 (YHLYVAPVHRDWRVHLALD) the chain is on the extracellular side. A helical transmembrane segment spans residues 305–325 (IANMLAMLNTEVNFGLYCFIS). Over 326–365 (KTFRATVRQVICDVHMACALKSQPKQTVVELMLKSVGTEL) the chain is Cytoplasmic.

This sequence belongs to the G-protein coupled receptor 1 family.

It localises to the cell membrane. Orphan receptor. This Mus musculus (Mouse) protein is Probable G-protein coupled receptor 142 (Gpr142).